The sequence spans 492 residues: Protein adenylyltransferase Fic (492 aa).

Residues 1-18 (MGTEAEQPSPPAQQQDQE) show a composition bias toward low complexity. The segment at 1–26 (MGTEAEQPSPPAQQQDQENPPLCKAQ) is disordered. The chain crosses the membrane as a helical span at residues 33–55 (LYRFVLIFVAGSLAAWTFHALSS). TPR repeat units lie at residues 118–151 (ALGA…APRH) and 152–186 (PEVL…SPSN). Positions 243-248 (SVGIEG) match the Inhibitory (S/T)XXXE(G/N) motif motif. Residues E247 and 328 to 331 (VGGH) contribute to the ATP site. The 136-residue stretch at 297–432 (ITIKDILELH…IRPFVRFIAD (136 aa)) folds into the Fido domain. The active site involves H375. ATP-binding positions include 379–386 (DGNGRTSR), 411–412 (YY), and N419.

Belongs to the fic family. Homodimer; homodimerization may regulate adenylyltransferase and phosphodiesterase activities.

The protein localises to the membrane. The enzyme catalyses L-tyrosyl-[protein] + ATP = O-(5'-adenylyl)-L-tyrosyl-[protein] + diphosphate. It catalyses the reaction L-threonyl-[protein] + ATP = 3-O-(5'-adenylyl)-L-threonyl-[protein] + diphosphate. The catalysed reaction is 3-O-(5'-adenylyl)-L-threonyl-[protein] + H2O = L-threonyl-[protein] + AMP + H(+). Its activity is regulated as follows. The side chain of Glu-247 determines which of the two opposing activities (AMPylase or de-AMPylase) will take place. In response to endoplasmic reticulum stress, mediates de-AMPylase activity. Adenylyltransferase activity is inhibited by the inhibitory helix present at the N-terminus: Glu-247 binds ATP and competes with ATP-binding at Arg-386, thereby preventing adenylyltransferase activity. In unstressed cells, disengagement of Glu-247 promotes adenylyltransferase activity. Activation dissociates ATP-binding from Glu-247, allowing ordered binding of the entire ATP moiety with the alpha-phosphate in an orientation that is productive for accepting an incoming target hydroxyl side chain. In terms of biological role, protein that can both mediate the addition of adenosine 5'-monophosphate (AMP) to specific residues of target proteins (AMPylation), and the removal of the same modification from target proteins (de-AMPylation), depending on the context. The side chain of Glu-247 determines which of the two opposing activities (AMPylase or de-AMPylase) will take place. Acts as a key regulator of the unfolded protein response (UPR) by mediating AMPylation or de-AMPylation of Hsc70-3/BiP. In unstressed cells, acts as an adenylyltransferase by mediating AMPylation of Hsc70-3/BiP at 'Thr-518', thereby inactivating it. In response to endoplasmic reticulum stress, acts as a phosphodiesterase by mediating removal of ATP (de-AMPylation) from Hsc70-3/BiP at 'Thr-518', leading to restore HSPA5/BiP activity. The protein is Protein adenylyltransferase Fic of Drosophila melanogaster (Fruit fly).